A 487-amino-acid chain; its full sequence is Probable cytochrome P450 516A1 (487 aa).

Residues 1-21 (MIILLLSIIIFILYIVKIFKN) traverse the membrane as a helical segment. C434 is a binding site for heme.

This sequence belongs to the cytochrome P450 family. Requires heme as cofactor.

It localises to the membrane. The polypeptide is Probable cytochrome P450 516A1 (cyp516A1) (Dictyostelium discoideum (Social amoeba)).